The primary structure comprises 193 residues: Interleukin-18 (193 aa).

A propeptide spanning residues 1–36 (MAAEQVEDNCISFVEMKFINNTLYFVAENDEDLESD) is cleaved from the precursor.

Belongs to the IL-1 family. As to quaternary structure, forms a ternary complex with ligand-binding receptor subunit IL18R1 and signaling receptor subunit IL18RAP at the plasma membrane. Mature IL18 first binds to IL18R1 forming a low affinity binary complex, which then interacts with IL18RAP to form a high affinity ternary complex that signals inside the cell. Interacts with cargo receptor TMED10; the interaction mediates the translocation from the cytoplasm into the ERGIC (endoplasmic reticulum-Golgi intermediate compartment) and thereby secretion. Post-translationally, the pro-IL-18 precursor is processed by CASP1, CASP4 or CASP5 to yield its mature, active form. The pro-IL-18 precursor features autoinhibitory interactions between the propeptide and the post-cleavage-site region, preventing recognition by the IL18R1 receptor. Processing by CASP1, CASP4 or CASP5 induces conformational changes to generate critical receptor-binding sites. The mature form is then secreted and released in the extracellular milieu by passing through the gasdermin-D (GSDMD) pore. In contrast, cleavage by CASP3 inactivates IL18.

The protein localises to the cytoplasm. Its subcellular location is the cytosol. It localises to the secreted. Pro-inflammatory cytokine primarily involved in epithelial barrier repair, polarized T-helper 1 (Th1) cell and natural killer (NK) cell immune responses. Upon binding to IL18R1 and IL18RAP, forms a signaling ternary complex which activates NF-kappa-B, triggering synthesis of inflammatory mediators. Synergizes with IL12/interleukin-12 to induce IFNG synthesis from T-helper 1 (Th1) cells and natural killer (NK) cells. Involved in transduction of inflammation downstream of pyroptosis: its mature form is specifically released in the extracellular milieu by passing through the gasdermin-D (GSDMD) pore. The sequence is that of Interleukin-18 (IL18) from Boselaphus tragocamelus (Nilgai).